The chain runs to 738 residues: Eukaryotic translation initiation factor 3 subunit B (738 aa).

A sufficient for interaction with HCR1 and TIF32 region spans residues 1 to 120 (MCGCVGVISN…LFIQFKTAQM (120 aa)). A sufficient for interaction with PIC8 region spans residues 1-245 (MCGCVGVISN…GIQSWGGAQF (245 aa)). The RRM domain occupies 59-146 (NFVVVDGAPI…HRLLVNKLSD (88 aa)). WD repeat units follow at residues 211–250 (PRKG…SISK), 322–360 (QKEM…LLDK), 363–406 (VKID…QTAR), and 537–579 (VVDK…ENVR).

The protein belongs to the eIF-3 subunit B family. As to quaternary structure, component of the eukaryotic translation initiation factor 3 (eIF-3) complex.

It is found in the cytoplasm. Its function is as follows. RNA-binding component of the eukaryotic translation initiation factor 3 (eIF-3) complex, which is involved in protein synthesis of a specialized repertoire of mRNAs and, together with other initiation factors, stimulates binding of mRNA and methionyl-tRNAi to the 40S ribosome. The eIF-3 complex specifically targets and initiates translation of a subset of mRNAs involved in cell proliferation. This chain is Eukaryotic translation initiation factor 3 subunit B, found in Meyerozyma guilliermondii (strain ATCC 6260 / CBS 566 / DSM 6381 / JCM 1539 / NBRC 10279 / NRRL Y-324) (Yeast).